A 380-amino-acid polypeptide reads, in one-letter code: MAPNIRKSHPLMKIINNSLIDLPTPSNISAWWNFGSLLAVCLATQIITGLLLAAHYTADTTLAFSSVAHTCRNVQYGWLIRNLHANGASFFFICIYLHIGRGIYYGSYLYKETWNTGVILLLTLMATAFVGYVLPWGQMSFWGATVITNLFSAVPYIGQTLVEWAWGGFSVDNPTLTRFFALHFLLPFIIAGITIIHLAFLHESGSNNPLGISSNSDKIPFHPYYSLKDILGLALMITPLLTLALFSPNLLGDPENFTPANPLTTPPHIKPEWYFLFAYAILRSIPNKLGGVLALAASVFILFLIPLLHKSKQRTMTFRPLSQLLFWLLAANLFILTWIGSQPVEHPFIIIGQLASLSYFTTLLILFPIVGTLENKMLKL.

The next 4 membrane-spanning stretches (helical) occupy residues 34 to 54, 78 to 99, 114 to 134, and 179 to 199; these read FGSL…LLAA, WLIR…YLHI, WNTG…GYVL, and FFAL…IHLA. Heme b-binding residues include H84 and H98. Heme b contacts are provided by H183 and H197. H202 lines the a ubiquinone pocket. Transmembrane regions (helical) follow at residues 227–247, 289–309, 321–341, and 348–368; these read LKDI…ALFS, LGGV…PLLH, LSQL…WIGS, and FIII…ILFP.

The protein belongs to the cytochrome b family. In terms of assembly, the cytochrome bc1 complex contains 11 subunits: 3 respiratory subunits (MT-CYB, CYC1 and UQCRFS1), 2 core proteins (UQCRC1 and UQCRC2) and 6 low-molecular weight proteins (UQCRH/QCR6, UQCRB/QCR7, UQCRQ/QCR8, UQCR10/QCR9, UQCR11/QCR10 and a cleavage product of UQCRFS1). This cytochrome bc1 complex then forms a dimer. Heme b serves as cofactor.

Its subcellular location is the mitochondrion inner membrane. Component of the ubiquinol-cytochrome c reductase complex (complex III or cytochrome b-c1 complex) that is part of the mitochondrial respiratory chain. The b-c1 complex mediates electron transfer from ubiquinol to cytochrome c. Contributes to the generation of a proton gradient across the mitochondrial membrane that is then used for ATP synthesis. In Cyrtonyx montezumae (Montezuma quail), this protein is Cytochrome b (MT-CYB).